The primary structure comprises 493 residues: ATP synthase subunit beta 3 (493 aa).

Residues 113 to 138 (VPGDNGTPLPPGTPRRPIHRKPPPLA) form a disordered region. 170–177 (GGAGVGKT) serves as a coordination point for ATP.

The protein belongs to the ATPase alpha/beta chains family. F-type ATPases have 2 components, CF(1) - the catalytic core - and CF(0) - the membrane proton channel. CF(1) has five subunits: alpha(3), beta(3), gamma(1), delta(1), epsilon(1). CF(0) has three main subunits: a(1), b(2) and c(9-12). The alpha and beta chains form an alternating ring which encloses part of the gamma chain. CF(1) is attached to CF(0) by a central stalk formed by the gamma and epsilon chains, while a peripheral stalk is formed by the delta and b chains.

The protein localises to the cell inner membrane. It catalyses the reaction ATP + H2O + 4 H(+)(in) = ADP + phosphate + 5 H(+)(out). In terms of biological role, produces ATP from ADP in the presence of a proton gradient across the membrane. The catalytic sites are hosted primarily by the beta subunits. In Paraburkholderia xenovorans (strain LB400), this protein is ATP synthase subunit beta 3.